A 250-amino-acid chain; its full sequence is Mediator of RNA polymerase II transcription subunit 6 (250 aa).

Residues 166–250 (KKREEEKKED…EPTARTTSKQ (85 aa)) form a disordered region. Residues 204-223 (PAEDALEREEKEEVEEEEEE) are compositionally biased toward acidic residues. Basic and acidic residues predominate over residues 224–239 (TLKTEEPTTSTDEPKF).

This sequence belongs to the Mediator complex subunit 6 family. Component of the Mediator complex. Interacts with let-19/mdt-13. Interacts with RNA polymerase II. Interacts with mdt-28.

Its subcellular location is the nucleus. Functionally, component of the Mediator complex, a coactivator involved in the regulated transcription of nearly all RNA polymerase II-dependent genes. Mediator functions as a bridge to convey information from gene-specific regulatory proteins to the basal RNA polymerase II transcription machinery. Mediator is recruited to promoters by direct interactions with regulatory proteins and serves as a scaffold for the assembly of a functional preinitiation complex with RNA polymerase II and the general transcription factors. Acts to repress beta-catenin target genes. Required for asymmetric division of T-cells and for gonad and germ cell development. The chain is Mediator of RNA polymerase II transcription subunit 6 (mdt-6) from Caenorhabditis elegans.